Reading from the N-terminus, the 2205-residue chain is Kinesin-related protein 1 (2205 aa).

The region spanning 2 to 355 (NVQVAVRVRP…LRYADSAKKI (354 aa)) is the Kinesin motor domain. 102-109 (GQTGSGKS) is a binding site for ATP. The stretch at 362–448 (NEDAQSKLIR…EDRMAALKDM (87 aa)) forms a coiled coil. One can recognise an FHA domain in the interval 483–595 (TRIGRSDSEI…LTTGNRVILG (113 aa)). The segment covering 525–548 (FMNNNNNKENSSSTTPTSSKSPSK) has biased composition (low complexity). Disordered stretches follow at residues 525-568 (FMNN…EKKL), 971-993 (SKQQ…SSKN), 1084-1226 (DNPL…TNSA), and 1455-1508 (THQQ…STIV). The span at 549 to 568 (PKSEKEKENNNDDDDGEKKL) shows a compositional bias: basic and acidic residues. 3 stretches are compositionally biased toward low complexity: residues 978-991 (TSSS…SSSS), 1089-1103 (SSSA…PNNS), and 1117-1142 (TPYS…QGTP). Polar residues predominate over residues 1143–1164 (YNPQSNNPNVISNAPPTPNSNL). Low complexity-rich tracts occupy residues 1169–1226 (SLAA…TNSA) and 1455–1492 (THQQ…TSSS). The PH domain occupies 1523–1616 (EDETSGYLKK…WVQTLDPLRK (94 aa)). Coiled-coil stretches lie at residues 1879-1918 (KDES…ETSA), 1946-2034 (SAQV…NGMA), and 2075-2149 (AHQS…KKKY).

The protein belongs to the TRAFAC class myosin-kinesin ATPase superfamily. Kinesin family. Unc-104 subfamily. Homodimer.

The protein resides in the cytoplasm. It localises to the cytoskeleton. Its subcellular location is the cytoplasmic vesicle membrane. Microtubule-associated force-producing protein that plays a role in organelle transport. Its motor activity is directed toward the microtubule's plus end. Transports cytoplasmic vesicles and particularly phosphatidylinositol 4,5-bisphosphate-containing liposomes along microtubules. This is Kinesin-related protein 1 (kif1) from Dictyostelium discoideum (Social amoeba).